A 1260-amino-acid polypeptide reads, in one-letter code: uncharacterized protein (1260 aa).

The protein resides in the plastid. Its subcellular location is the chloroplast. This is an uncharacterized protein from Ostreococcus tauri.